We begin with the raw amino-acid sequence, 139 residues long: Endoribonuclease YbeY (139 aa).

The Zn(2+) site is built by H105, H109, and D115.

Belongs to the endoribonuclease YbeY family. Requires Zn(2+) as cofactor.

It localises to the cytoplasm. Single strand-specific metallo-endoribonuclease involved in late-stage 70S ribosome quality control and in maturation of the 3' terminus of the 16S rRNA. This is Endoribonuclease YbeY from Flavobacterium johnsoniae (strain ATCC 17061 / DSM 2064 / JCM 8514 / BCRC 14874 / CCUG 350202 / NBRC 14942 / NCIMB 11054 / UW101) (Cytophaga johnsonae).